The primary structure comprises 67 residues: MAVPKRKMSRSNTRARRSQWKATAPHLVKTVENGQVTYSLPHQAKVVTDSAGTALFLEYKGRKVADV.

The span at 1-19 (MAVPKRKMSRSNTRARRSQ) shows a compositional bias: basic residues. The disordered stretch occupies residues 1 to 21 (MAVPKRKMSRSNTRARRSQWK).

The protein belongs to the bacterial ribosomal protein bL32 family.

The polypeptide is Large ribosomal subunit protein bL32 (Arthrobacter sp. (strain FB24)).